A 530-amino-acid polypeptide reads, in one-letter code: UPF0422 protein lpg2959 (530 aa).

The first 19 residues, M1 to A19, serve as a signal peptide directing secretion. Residues D20–A66 adopt a coiled-coil conformation. The interval L50–A81 is disordered. Residues Q63–P75 show a composition bias toward low complexity.

The protein belongs to the UPF0422 family.

This Legionella pneumophila subsp. pneumophila (strain Philadelphia 1 / ATCC 33152 / DSM 7513) protein is UPF0422 protein lpg2959.